Consider the following 147-residue polypeptide: Anti-sigma F factor (147 aa).

Belongs to the anti-sigma-factor family.

It carries out the reaction L-seryl-[protein] + ATP = O-phospho-L-seryl-[protein] + ADP + H(+). The enzyme catalyses L-threonyl-[protein] + ATP = O-phospho-L-threonyl-[protein] + ADP + H(+). Functionally, binds to sigma F and blocks its ability to form an RNA polymerase holoenzyme (E-sigma F). Phosphorylates SpoIIAA on a serine residue. This phosphorylation may enable SpoIIAA to act as an anti-anti-sigma factor that counteracts SpoIIAB and thus releases sigma F from inhibition. This is Anti-sigma F factor from Priestia megaterium (Bacillus megaterium).